Reading from the N-terminus, the 154-residue chain is Proteinase inhibitor type-2 P303.51 (154 aa).

Residues 1–25 (MAVHKEVNFVAYLLIVLGLLVLVSA) form the signal peptide. 2 repeat units span residues 31–87 (AKAC…DPKK) and 88–147 (PKAC…DEPK). 8 cysteine pairs are disulfide-bonded: C34–C122, C38–C118, C46–C128, C58–C95, C61–C79, C62–C91, C68–C104, and C121–C139.

It belongs to the protease inhibitor I20 (potato type II proteinase inhibitor) family.

This Solanum tuberosum (Potato) protein is Proteinase inhibitor type-2 P303.51.